A 341-amino-acid chain; its full sequence is Ketol-acid reductoisomerase (NADP(+)) (341 aa).

Residues 1-182 (MATIYYDKDA…GCTRAGVLET (182 aa)) enclose the KARI N-terminal Rossmann domain. NADP(+) contacts are provided by residues 25–28 (YGSQ), Ser-51, Ser-53, and 83–86 (DQTQ). Residue His-108 is part of the active site. Gly-134 provides a ligand contact to NADP(+). Positions 183 to 328 (TFKEETETDL…KRLRDMMSWI (146 aa)) constitute a KARI C-terminal knotted domain. Residues Asp-191, Glu-195, Glu-227, and Glu-231 each coordinate Mg(2+). Ser-252 is a substrate binding site.

It belongs to the ketol-acid reductoisomerase family. Mg(2+) serves as cofactor.

It catalyses the reaction (2R)-2,3-dihydroxy-3-methylbutanoate + NADP(+) = (2S)-2-acetolactate + NADPH + H(+). The catalysed reaction is (2R,3R)-2,3-dihydroxy-3-methylpentanoate + NADP(+) = (S)-2-ethyl-2-hydroxy-3-oxobutanoate + NADPH + H(+). It functions in the pathway amino-acid biosynthesis; L-isoleucine biosynthesis; L-isoleucine from 2-oxobutanoate: step 2/4. Its pathway is amino-acid biosynthesis; L-valine biosynthesis; L-valine from pyruvate: step 2/4. Functionally, involved in the biosynthesis of branched-chain amino acids (BCAA). Catalyzes an alkyl-migration followed by a ketol-acid reduction of (S)-2-acetolactate (S2AL) to yield (R)-2,3-dihydroxy-isovalerate. In the isomerase reaction, S2AL is rearranged via a Mg-dependent methyl migration to produce 3-hydroxy-3-methyl-2-ketobutyrate (HMKB). In the reductase reaction, this 2-ketoacid undergoes a metal-dependent reduction by NADPH to yield (R)-2,3-dihydroxy-isovalerate. This is Ketol-acid reductoisomerase (NADP(+)) from Anaeromyxobacter dehalogenans (strain 2CP-C).